A 180-amino-acid polypeptide reads, in one-letter code: MASMISSSAVTTVSRASTVQSAAVAPFGGLKSMTGFPVKKVNTDITSITSNGGRVKCMQVWPPIGKKKFETLSYLPPLTRDQLLKEVEYLLRKGWVPCLEFELEKGFVYREHNKSPGYYDGRYWTMWKLPMFGTTDASQVLKELDEVVAAYPQAFVRIIGFDNVRQVQCISFIAHTPESY.

A chloroplast-targeting transit peptide spans 1 to 56 (MASMISSSAVTTVSRASTVQSAAVAPFGGLKSMTGFPVKKVNTDITSITSNGGRVK).

This sequence belongs to the RuBisCO small chain family. In terms of assembly, heterohexadecamer of 8 large and 8 small subunits.

The protein resides in the plastid. It localises to the chloroplast. Its function is as follows. RuBisCO catalyzes two reactions: the carboxylation of D-ribulose 1,5-bisphosphate, the primary event in carbon dioxide fixation, as well as the oxidative fragmentation of the pentose substrate. Both reactions occur simultaneously and in competition at the same active site. Although the small subunit is not catalytic it is essential for maximal activity. Binds to abscisic acid (ABA); only half of the possible binding sites are occupied in the crystal; and there are indications this is a low affinity site. The protein is Ribulose bisphosphate carboxylase small subunit, chloroplastic 3 (RBCS.3A) of Pisum sativum (Garden pea).